Consider the following 489-residue polypeptide: Probable 26S proteasome non-ATPase regulatory subunit 3 (489 aa).

The tract at residues M1–T23 is disordered. The PCI domain maps to C241–D422. The tract at residues P454 to F489 is disordered. The span at S457–A482 shows a compositional bias: basic and acidic residues.

The protein belongs to the proteasome subunit S3 family. As to quaternary structure, the 26S proteasome is composed of a core protease, known as the 20S proteasome, capped at one or both ends by the 19S regulatory complex (RC). The RC is composed of at least 18 different subunits in two subcomplexes, the base and the lid, which form the portions proximal and distal to the 20S proteolytic core, respectively.

The protein resides in the nucleus. In terms of biological role, acts as a regulatory subunit of the 26 proteasome which is involved in the ATP-dependent degradation of ubiquitinated proteins. The sequence is that of Probable 26S proteasome non-ATPase regulatory subunit 3 (21D7) from Daucus carota (Wild carrot).